The chain runs to 690 residues: MKPLLLLTLLGCLAAALAVPAQKVKWCVKSDQEFRKCSDLAAASPAFSCVKKESTLDCIIAIKAGEADAITVDGGDVYTAGLNNYDLHPIIAEDYGTSSETCYYAVAVAKKGTTFGIRDLRGKKSCHTGLGKSAGWNIPIGTLVSMDIIQWAGVEDKPVEEEVSTFFQASCVPGATRGSKLCELCKGDCSRSQKEPYYDYNGAFNCLAEGAGDVAFVKHLTVPDQEKSKYELLCRDNTRAPIDDYKKCNLARVPAHAIVTHKDPQLAELIWTSLNSVQNFNLFSSEAYAPSKNLMFKDSTQRLVKLPQNTDSFLYLGAQYMSIVRSLKKEQSVGTNSNAIKWCAVGHAETAKCDTWSINSVTDDTAAIECQNAPSVEECLKKIMRKEADAMAVDGGEVYTAGKCGLVPAMVEQYDAELCSSSGGQASSYYAVAVVKKDSGVTWENLKGKKSCHTGIGRTAGWNIPMGRIYDQTKDCDFTKFFPSGCAPEPKPALHCALCVKAAAKLSGDEAKCKARPEEQYYGYAGAFRCLAEGAGDVAFIKHTIVGENTDGNGPDWARSLKSDDYQLICPGKGPVPISEYASCNLAVVPAHAVVTRPESRSDVVRVLQVQQTFFGASGSDPSFKLFQSQNGNNLLFKDSTKCLQEVPAGTSYDQFLGSGYMEAMTSLRKCSDTASDLEKSCTFHSCQQT.

Residues 1-17 form the signal peptide; the sequence is MKPLLLLTLLGCLAAAL. 2 Transferrin-like domains span residues 24–329 and 340–670; these read VKWC…SLKK and IKWC…SLRK. A disulfide bond links cysteine 27 and cysteine 49. Aspartate 73 and tyrosine 103 together coordinate Fe(3+). 3 disulfides stabilise this stretch: cysteine 126-cysteine 206, cysteine 171-cysteine 185, and cysteine 234-cysteine 248. The hydrogencarbonate site is built by threonine 128, lysine 132, alanine 134, and glycine 135. Tyrosine 200 is a binding site for Fe(3+). Histidine 256 contacts Fe(3+). 2 disulfide bridges follow: cysteine 343–cysteine 379 and cysteine 353–cysteine 370. Fe(3+)-binding residues include aspartate 394 and tyrosine 429. Disulfide bonds link cysteine 404/cysteine 682, cysteine 419/cysteine 643, cysteine 452/cysteine 530, cysteine 476/cysteine 671, cysteine 486/cysteine 499, cysteine 496/cysteine 513, and cysteine 570/cysteine 584. Positions 454, 458, 460, and 461 each coordinate hydrogencarbonate. Tyrosine 524 lines the Fe(3+) pocket. Histidine 592 contributes to the Fe(3+) binding site.

It belongs to the transferrin family. Monomer.

It is found in the secreted. In terms of biological role, transferrins are iron binding transport proteins which can bind two Fe(3+) ions in association with the binding of an anion, usually bicarbonate. This is Serotransferrin (tf) from Oryzias latipes (Japanese rice fish).